A 323-amino-acid polypeptide reads, in one-letter code: Malate dehydrogenase (323 aa).

NAD(+)-binding positions include 20-25 (GAGRVG) and D44. 2 residues coordinate substrate: R93 and R99. NAD(+)-binding positions include N106 and 129–131 (VTN). The substrate site is built by N131 and R162. H186 functions as the Proton acceptor in the catalytic mechanism.

This sequence belongs to the LDH/MDH superfamily. MDH type 3 family.

It carries out the reaction (S)-malate + NAD(+) = oxaloacetate + NADH + H(+). Catalyzes the reversible oxidation of malate to oxaloacetate. The protein is Malate dehydrogenase of Nostoc sp. (strain PCC 7120 / SAG 25.82 / UTEX 2576).